The chain runs to 450 residues: Phosphoglucosamine mutase (450 aa).

Residue Ser102 is the Phosphoserine intermediate of the active site. Residues Ser102, Asp244, Asp246, and Asp248 each coordinate Mg(2+). Ser102 is subject to Phosphoserine.

Belongs to the phosphohexose mutase family. Mg(2+) serves as cofactor. Activated by phosphorylation.

It carries out the reaction alpha-D-glucosamine 1-phosphate = D-glucosamine 6-phosphate. Its function is as follows. Catalyzes the conversion of glucosamine-6-phosphate to glucosamine-1-phosphate. The sequence is that of Phosphoglucosamine mutase from Desulfovibrio desulfuricans (strain ATCC 27774 / DSM 6949 / MB).